The sequence spans 218 residues: Adenylate kinase (218 aa).

10-15 (GAGKGT) contacts ATP. The tract at residues 30-59 (STGDMLRAAVKAGTPLGIEAKKVMDAGGLM) is NMP. Residues Thr31, Arg36, 57-59 (GLM), 85-88 (GYPR), and Gln92 each bind AMP. The interval 122 to 159 (GRWVHLASGRSYNTQSNPPKVAGQDDITGEALIQRDDD) is LID. Residues Arg123 and 132–133 (SY) each bind ATP. The AMP site is built by Arg156 and Arg167. Gly203 provides a ligand contact to ATP.

The protein belongs to the adenylate kinase family. Monomer.

It localises to the cytoplasm. It catalyses the reaction AMP + ATP = 2 ADP. The protein operates within purine metabolism; AMP biosynthesis via salvage pathway; AMP from ADP: step 1/1. Catalyzes the reversible transfer of the terminal phosphate group between ATP and AMP. Plays an important role in cellular energy homeostasis and in adenine nucleotide metabolism. The protein is Adenylate kinase of Bordetella avium (strain 197N).